The primary structure comprises 207 residues: Outer-membrane lipoprotein LolB (207 aa).

A signal peptide spans 1–26 (MSKLKIDTKRRFSLLIALVLIISLSS). The N-palmitoyl cysteine moiety is linked to residue C27. C27 carries S-diacylglycerol cysteine lipidation.

It belongs to the LolB family. As to quaternary structure, monomer.

Its subcellular location is the cell outer membrane. Its function is as follows. Plays a critical role in the incorporation of lipoproteins in the outer membrane after they are released by the LolA protein. The polypeptide is Outer-membrane lipoprotein LolB (Francisella tularensis subsp. tularensis (strain FSC 198)).